The primary structure comprises 110 residues: Putative membrane protein insertion efficiency factor (110 aa).

It belongs to the UPF0161 family.

The protein resides in the cell inner membrane. Functionally, could be involved in insertion of integral membrane proteins into the membrane. In Campylobacter hominis (strain ATCC BAA-381 / DSM 21671 / CCUG 45161 / LMG 19568 / NCTC 13146 / CH001A), this protein is Putative membrane protein insertion efficiency factor.